The sequence spans 602 residues: MFSLLSRALCAASSSPAAPRGRSLLAALLSPSASPLDPCRGPAAPEPPRRRAFHGSPSPLGFRSTPASWSSPEAGAAVGGDDGLEVARLGISPWIVERLAARGITRLFPIQRAVLDPAMQGKDMIGRARTGTGKTLAFGIPIMDRILRHNEKNGSGRNPLAIILAPTRELARQVEKEFKESAPLDSLCVYGGVPISHQMRALNYGVDVVVGTPGRIIDLLRRGVLNLSEIQFVVLDEADQMLAVGFDEDVEVIMENLPQNRQSMLFSATMPSWIRKITSKYLKDPIIIDLVGDEDQKLPEGISLYSIASEHYGKPSILGPLIKEHANGGKCIVFTQTKREADRLAYAMGRSYACQALHGDISQNQRERTLSGFRDGRFNILVATDVAARGLDIPNVDLVIHYELPNTSELFVHRSGRTARAGKKGSAILIYTNDQARAVRIIEQDIGCKFTELPKIEVADEASDMFNVVRDNRSRLAGSPRTGGSSFGRGGYGGFGEGRSRGFGDFDGFGSSPNRGGRSRDAGSRYGSGFGDFRRPSNAFGRSSSKQPDGFGFGDFGEGNFSRNGNRRSRSFDDSGSTRYSRRPNGFGTSDFGRSGGFDDSN.

The segment covering 33 to 43 has biased composition (low complexity); that stretch reads ASPLDPCRGPA. Residues 33 to 76 form a disordered region; sequence ASPLDPCRGPAAPEPPRRRAFHGSPSPLGFRSTPASWSSPEAGA. Positions 84–112 match the Q motif motif; sequence LEVARLGISPWIVERLAARGITRLFPIQR. Positions 115-288 constitute a Helicase ATP-binding domain; the sequence is LDPAMQGKDM…SKYLKDPIII (174 aa). ATP is bound at residue 128-135; that stretch reads ARTGTGKT. The DEAD box signature appears at 236 to 239; that stretch reads DEAD. Residues 317-462 enclose the Helicase C-terminal domain; that stretch reads ILGPLIKEHA…LPKIEVADEA (146 aa). Residues 503 to 602 form a disordered region; sequence FGDFDGFGSS…GRSGGFDDSN (100 aa).

This sequence belongs to the DEAD box helicase family. DDX21/DDX50 subfamily.

It carries out the reaction ATP + H2O = ADP + phosphate + H(+). This Oryza sativa subsp. japonica (Rice) protein is DEAD-box ATP-dependent RNA helicase 53.